The following is a 455-amino-acid chain: Major facilitator superfamily domain-containing protein 10 (455 aa).

A run of 11 helical transmembrane segments spans residues 27–47, 86–106, 113–135, 148–168, 176–196, 202–222, 275–295, 310–327, 336–356, 359–379, and 421–441; these read VVFLGLLLDLLAFTLLLPLLP, VLFGGLIGSAFSVLQFLCAPL, CLGRRPVMLLCLMGVATSYAVWA, LIGGISKGNVSLSTAIVADLG, GMAVIGVAFSLGFTLGPMLGA, MAPWFALLFAASDLLFIFCFL, LGLVYFLYLFLFSGLEYTLSF, KMFFLIGLTMATIQGAYA, VAAVKRALLLLVPAFLLIGWG, LPVLGLGLLLYSFAAAVVVPC, and LAGAQACFTTWSGLFLLPFFL.

This sequence belongs to the major facilitator superfamily. In terms of tissue distribution, expressed in luminal membrane of renal tubules (at protein level). Detected in all tissues tested with higher expression in heart, splee, kidney, leukocytes and prostate.

Its subcellular location is the nucleus inner membrane. It localises to the cell membrane. Its function is as follows. Probable organic anion transporter which may serve as a transporter for some non-steroidal anti-inflammatory drugs (NSAIDs) as well as other organic anions across the luminal membranes of renal proximal tubules at the final excretion step into the urine. The polypeptide is Major facilitator superfamily domain-containing protein 10 (MFSD10) (Homo sapiens (Human)).